A 169-amino-acid polypeptide reads, in one-letter code: MASSEFIDPAKLDLDDQVVAINRITKVVKGGRRMRFAALVIVGDRKGHVGFGTGKAQEVPEAIRKAQAAAEKNLITVPIVGTTIPHEVIGVYGGGKIMLKPAVEGSGVAAGGAVRNVMDLAGVADVTSKRLGSNTPVNVVRATFEGLKQLKNAEEVAKLRGVSVDHLAE.

The S5 DRBM domain maps to 14–77 (LDDQVVAINR…AAAEKNLITV (64 aa)).

The protein belongs to the universal ribosomal protein uS5 family. In terms of assembly, part of the 30S ribosomal subunit. Contacts proteins S4 and S8.

With S4 and S12 plays an important role in translational accuracy. Its function is as follows. Located at the back of the 30S subunit body where it stabilizes the conformation of the head with respect to the body. The protein is Small ribosomal subunit protein uS5 of Limosilactobacillus reuteri (strain DSM 20016) (Lactobacillus reuteri).